A 63-amino-acid polypeptide reads, in one-letter code: Beta-defensin 4 (63 aa).

The N-terminal stretch at 1 to 22 is a signal peptide; the sequence is MRIHYLLFTFLLVLLSPLAAFT. A Pyrrolidone carboxylic acid modification is found at Gln23. Disulfide bonds link Cys31/Cys59, Cys38/Cys52, and Cys42/Cys60.

It belongs to the beta-defensin family. In terms of tissue distribution, tongue, esophagus and trachea.

The protein resides in the secreted. In terms of biological role, exhibits antimicrobial activity against Gram-negative bacteria and Gram-positive bacteria. May act as a ligand for C-C chemokine receptor CCR6. Can bind to mouse (but not human) CCR6 and induce chemotactic activity of CCR6-expressing cells. This is Beta-defensin 4 (Defb4) from Mus musculus (Mouse).